The chain runs to 295 residues: MNAEEAQQQAAILSSALPFLRRYAGDTIVVKYGGHAMGEGKLAHAFGYDISLLKLVGINPIVVHGGGPQISAMLDRLKIRSEFIDGLRVTDKSMVDVIEMVLSGSVNKQVTQLINRAGALAVGISGKDGGLIQARRLTRTKRDPDSEIEKVIDLGFVGQPEKIDPRVLYALLGAGLIPVIAPVGVGEDGETYNINADTAAGAIAGAVHASRLLMLTDVPGVLDENGKLIEELSADEAMRRIADGSISGGMIPKVETCLEAVRKGAKAAVILDGRVPHSCLLELFTRAGPGTLIKA.

Substrate contacts are provided by residues 66–67, Arg-88, and Asn-193; that span reads GG.

The protein belongs to the acetylglutamate kinase family. ArgB subfamily.

The protein localises to the cytoplasm. It carries out the reaction N-acetyl-L-glutamate + ATP = N-acetyl-L-glutamyl 5-phosphate + ADP. It functions in the pathway amino-acid biosynthesis; L-arginine biosynthesis; N(2)-acetyl-L-ornithine from L-glutamate: step 2/4. Functionally, catalyzes the ATP-dependent phosphorylation of N-acetyl-L-glutamate. This is Acetylglutamate kinase from Gluconobacter oxydans (strain 621H) (Gluconobacter suboxydans).